Here is a 249-residue protein sequence, read N- to C-terminus: 2,3-bisphosphoglycerate-dependent phosphoglycerate mutase (249 aa).

Substrate is bound by residues 9-16 (RHGESEWN), 22-23 (TG), Arg-61, 88-91 (ERHY), Lys-99, 115-116 (RR), and 184-185 (GN). His-10 (tele-phosphohistidine intermediate) is an active-site residue. The active-site Proton donor/acceptor is the Glu-88.

It belongs to the phosphoglycerate mutase family. BPG-dependent PGAM subfamily.

It catalyses the reaction (2R)-2-phosphoglycerate = (2R)-3-phosphoglycerate. It functions in the pathway carbohydrate degradation; glycolysis; pyruvate from D-glyceraldehyde 3-phosphate: step 3/5. In terms of biological role, catalyzes the interconversion of 2-phosphoglycerate and 3-phosphoglycerate. The sequence is that of 2,3-bisphosphoglycerate-dependent phosphoglycerate mutase from Cutibacterium acnes (strain DSM 16379 / KPA171202) (Propionibacterium acnes).